The primary structure comprises 573 residues: MATLRVSSLLASSPSSLHCNPSVFTKCQSSPRWAFSFSVTPLCSRRSKRIVHCIAGDTLGLTRPNESDAPKISIGAKDTDVVQWQGDLLAIGATENDLARDDNSKFKNPLLQRLDSKLNGLLSAASSEEDFSGKSGQSINLRLPGGRITLVGLGSSASSPTSYHSLGEAAAAAAKSAQARNIAVSLASTDGLSAESKINSASAIATGVMLGIFEDNRFRSESKTPALESLDILGLGTGPEIESKIKYAEHVCAGVILGRELVNAPANIVTPGALAEEAKKIASTYSDVITVNILDAEQCKELKMGAYLGVAAAATENPPYFIHLCFKTNSRERKTKIALVGKGLTFDSGGYNLKTGAGSKIELMKNDMGGAAAVLGAAKALGEIKPRGVEVHFIVAACENMISGAGMRPGDIVTASNGKTIEVNNTDAEGRLTLADALIYACNQGVEKIIDLATLTGAIVTALGPSVAGAFTPSDGLAREVVVAAEASGEKLWRMPMEESYWESMKSGVADMINTGPRDGGAITGALFLKQFVDEKVQWLHLDIAGPVWSDEKKNATGYGVSTLVEWVLRNSL.

The transit peptide at 1–53 (MATLRVSSLLASSPSSLHCNPSVFTKCQSSPRWAFSFSVTPLCSRRSKRIVHC) directs the protein to the chloroplast. K342 and D347 together coordinate Mn(2+). Residue K354 is part of the active site. Residues D367, D427, and E429 each contribute to the Mn(2+) site. R431 is a catalytic residue.

This sequence belongs to the peptidase M17 family. As to quaternary structure, homohexamer (dimer of homotrimers). Mn(2+) serves as cofactor. In terms of tissue distribution, in tubers and floral buds of untreated plants. After abscisic acid (ABA) treatment or mechanical wounding is mostly accumulated in leaves, to a lesser extent in stems, but not in roots.

The protein resides in the plastid. It is found in the chloroplast. It catalyses the reaction Release of an N-terminal amino acid, Xaa-|-Yaa-, in which Xaa is preferably Leu, but may be other amino acids including Pro although not Arg or Lys, and Yaa may be Pro. Amino acid amides and methyl esters are also readily hydrolyzed, but rates on arylamides are exceedingly low.. The enzyme catalyses Release of N-terminal proline from a peptide.. In terms of biological role, presumably involved in the processing and regular turnover of intracellular proteins. This Solanum tuberosum (Potato) protein is Leucine aminopeptidase, chloroplastic (LAP).